The sequence spans 285 residues: Ribosomal RNA small subunit methyltransferase H (285 aa).

Residues 34-36, Asp51, Phe75, Asp96, and His103 each bind S-adenosyl-L-methionine; that span reads AGH. A disordered region spans residues 259 to 285; sequence LVPSEKEAAQNPRARSAKLRAAEKEAP.

This sequence belongs to the methyltransferase superfamily. RsmH family.

It is found in the cytoplasm. The enzyme catalyses cytidine(1402) in 16S rRNA + S-adenosyl-L-methionine = N(4)-methylcytidine(1402) in 16S rRNA + S-adenosyl-L-homocysteine + H(+). Functionally, specifically methylates the N4 position of cytidine in position 1402 (C1402) of 16S rRNA. This is Ribosomal RNA small subunit methyltransferase H from Thermus thermophilus (strain ATCC 27634 / DSM 579 / HB8).